Consider the following 564-residue polypeptide: Beta-catenin-like protein 1 homolog (564 aa).

A disordered region spans residues 1–56 (MDVDSIFKNTEETNKKRNPEEADSLEPASSRRRLAEENSDEENEEFDEEGGRFFGS). Positions 9–20 (NTEETNKKRNPE) are enriched in basic and acidic residues. The segment covering 37–48 (ENSDEENEEFDE) has biased composition (acidic residues). Phosphoserine is present on Ser39. 2 HEAT repeats span residues 83–133 (PTEL…VLSE) and 138–177 (IPIF…DEDV). ARM repeat units follow at residues 179 to 229 (PDAL…LLSV), 230 to 276 (DNSI…LANS), 277 to 326 (KEAK…LVQE), 328 to 366 (KGKS…LLFG), and 367 to 411 (PLST…LFRS). The stretch at 465-528 (EKSTKWFLQQ…DALKNYHENL (64 aa)) forms a coiled coil.

It localises to the nucleus. Functionally, probable spliceosomal component involved in the activation of pre-mRNA splicing. This is Beta-catenin-like protein 1 homolog (ctnnbl1) from Schizosaccharomyces pombe (strain 972 / ATCC 24843) (Fission yeast).